We begin with the raw amino-acid sequence, 157 residues long: Rieske domain-containing protein (157 aa).

Methionine 1 bears the N-acetylmethionine mark. Serine 6 bears the Phosphoserine mark. Rieske domains follow at residues threonine 16–glycine 127 and serine 17–valine 131. [2Fe-2S] cluster contacts are provided by cysteine 57, histidine 59, cysteine 80, and histidine 83.

[2Fe-2S] cluster serves as cofactor.

The protein is Rieske domain-containing protein (Rfesd) of Mus musculus (Mouse).